The sequence spans 415 residues: Cell division control protein 11 (415 aa).

Serine 2 carries the N-acetylserine modification. Position 2 is a phosphoserine (serine 2). A Basic motif motif is present at residues 12–19; that stretch reads RKRKHLKR. The Septin-type G domain occupies 19–298; that stretch reads RGITFTVMIV…ERYRTEALSG (280 aa). Residues 29–36 form a G1 motif region; sequence GQSGSGRS. Residues 29–36, glycine 92, 172–180, glycine 230, and arginine 247 contribute to the GTP site; these read GQSGSGRS and KSDSLTRDE. The G3 motif stretch occupies residues 89–92; it reads DTPG. The interval 171-174 is G4 motif; the sequence is SKSD. Position 305 is a phosphoserine (serine 305). The disordered stretch occupies residues 307–360; that stretch reads RPNLTKLNGSSSSSTTTRRNTNPFKQSNNINNDVLNPASDMHGQSTGENNETYM. Residues 316 to 328 show a composition bias toward low complexity; the sequence is SSSSSTTTRRNTN. At threonine 327 the chain carries Phosphothreonine. 2 stretches are compositionally biased toward polar residues: residues 329–340 and 348–359; these read PFKQSNNINNDV and HGQSTGENNETY. Residues 354 to 414 are a coiled coil; it reads ENNETYMTRE…LEKEAKIKQE (61 aa). Lysine 412 participates in a covalent cross-link: Glycyl lysine isopeptide (Lys-Gly) (interchain with G-Cter in SUMO).

Belongs to the TRAFAC class TrmE-Era-EngA-EngB-Septin-like GTPase superfamily. Septin GTPase family. Component of the septin complex which consists of CDC3, CDC10, CDC11, CDC12 and probably SHS1 and rearranges to a cortical collar of highly ordered filaments at the mother-bud-neck. A complex formed by CDC3, CDC10, CDC11 and CDC12 is capable of forming long filaments in vitro and the components seem to be present in a 2:2:2:2 arrangement in vivo. The filaments are proposed to be formed by the end-to-end polymerization of CDC3-CDC12-CDC11 complexes with CDC10 serving as a bridge to bundle the polymers into paired filaments. Component of the GIN4 complex composed of at least BNI5, CDC3, CDC10, CDC11, CDC12, GIN4, NAP1 and SHS1. Self-associates. Interacts with BEM4, KCC4, SPR28 and SYP1. Interacts with BNI5. Post-translationally, sumoylated during mitosis on the mother cell side of the bud neck. Sumoylation probably plays a central role in regulating septin ring disassembly during the cell cycle.

Its subcellular location is the membrane. It localises to the bud neck. In terms of biological role, septins are GTPases involved in cytokinesis that assemble early in the cell cycle as a patch at the incipient bud site and form a ring approximate 15 minutes before bud emergence, which transforms into an hour-glass shaped collar of cortical filaments that spans both sides of the mother-bud neck. This collar persists until just before cytokinesis, when it splits into two rings that occupy opposite sides of the neck. The septins at the bud neck serve as a structural scaffold that recruits different components involved in diverse processes at specific stages during the cell cycle. Many proteins bind asymmetrically to the septin collar. The septin assembly is regulated by protein kinases GIN4 and/or CLA4. May act by recruiting MYO1 and HOF1, a protein involved in septation, to the site of cleavage. Septins are also involved in cell morphogenesis, bud site selection, chitin deposition, cell cycle regulation, cell compartmentalization and spore wall formation. CDCd11 with SHS1 11 are involved in the recruitment of BNI5 and thereby ensure efficient localization at the bud neck of MYO1, the type II myosin of the actomyosin contractile ring. The sequence is that of Cell division control protein 11 from Saccharomyces cerevisiae (strain ATCC 204508 / S288c) (Baker's yeast).